Here is a 303-residue protein sequence, read N- to C-terminus: Tyrosine recombinase XerC (303 aa).

The 87-residue stretch at 3 to 89 (IQNDQWVSAF…TLRSFYQFLV (87 aa)) folds into the Core-binding (CB) domain. A Tyr recombinase domain is found at 110–297 (KLPSFLYEEE…TKDRLRDVYR (188 aa)). Residues Arg-150, Lys-174, His-249, Arg-252, and His-275 contribute to the active site. Tyr-284 (O-(3'-phospho-DNA)-tyrosine intermediate) is an active-site residue.

It belongs to the 'phage' integrase family. XerC subfamily. In terms of assembly, forms a cyclic heterotetrameric complex composed of two molecules of XerC and two molecules of XerD.

Its subcellular location is the cytoplasm. Functionally, site-specific tyrosine recombinase, which acts by catalyzing the cutting and rejoining of the recombining DNA molecules. The XerC-XerD complex is essential to convert dimers of the bacterial chromosome into monomers to permit their segregation at cell division. It also contributes to the segregational stability of plasmids. This chain is Tyrosine recombinase XerC, found in Halalkalibacterium halodurans (strain ATCC BAA-125 / DSM 18197 / FERM 7344 / JCM 9153 / C-125) (Bacillus halodurans).